A 318-amino-acid chain; its full sequence is MFLMNILCLIIPILLAMAFLTLVERKILGYMQLRKGPNVVGPYGLLQPIADAIKLFIKEPLRPLTSSKTMFILAPTLAFSLALSMWIPMPMPHPLVNLNLGVLFILALSSLAVYSILWSGWASNSKYALIGALRAVAQTISYEVTLAIILLSIMMLNGSFTLSTLTTTQEHLWLIFPLWPLAMMWFISTLAETNRAPFDLTEGESELVSGFNVEYAAGPFALFFMAEYTNIIMMNALTTILFLGALHNPLFPELFTVNFVTKTLLLTVTFLWVRASYPRFRYDQLMHLLWKSFLPLTLALCMLHVSTPTMLAGIPPHM.

8 helical membrane-spanning segments follow: residues Phe-2 to Leu-22, Met-70 to Pro-90, Leu-100 to Gly-120, Val-136 to Leu-156, His-171 to Ala-191, Ile-231 to Phe-251, Glu-253 to Val-273, and Leu-294 to Ile-314.

This sequence belongs to the complex I subunit 1 family.

The protein resides in the mitochondrion inner membrane. It carries out the reaction a ubiquinone + NADH + 5 H(+)(in) = a ubiquinol + NAD(+) + 4 H(+)(out). In terms of biological role, core subunit of the mitochondrial membrane respiratory chain NADH dehydrogenase (Complex I) that is believed to belong to the minimal assembly required for catalysis. Complex I functions in the transfer of electrons from NADH to the respiratory chain. The immediate electron acceptor for the enzyme is believed to be ubiquinone. The chain is NADH-ubiquinone oxidoreductase chain 1 (MT-ND1) from Priodontes maximus (Giant armadillo).